An 878-amino-acid chain; its full sequence is DNA mismatch repair protein MutS (878 aa).

626–633 (GPNMAGKS) serves as a coordination point for ATP.

Belongs to the DNA mismatch repair MutS family.

Functionally, this protein is involved in the repair of mismatches in DNA. It is possible that it carries out the mismatch recognition step. This protein has a weak ATPase activity. The chain is DNA mismatch repair protein MutS from Paracoccus denitrificans (strain Pd 1222).